Consider the following 424-residue polypeptide: Tyrosine--tRNA ligase (424 aa).

Y37 provides a ligand contact to L-tyrosine. The 'HIGH' region signature appears at 42 to 51 (PTADSLHLGH). The L-tyrosine site is built by Y175 and Q179. A 'KMSKS' region motif is present at residues 235-239 (KFGKT). K238 contacts ATP. The S4 RNA-binding domain maps to 357–414 (ADLQQALVNAELVPSRGQARTMIGSNAVAINGEKQADPEYVFTDADRLFGRYTLLRRG).

This sequence belongs to the class-I aminoacyl-tRNA synthetase family. TyrS type 1 subfamily. As to quaternary structure, homodimer.

The protein resides in the cytoplasm. The catalysed reaction is tRNA(Tyr) + L-tyrosine + ATP = L-tyrosyl-tRNA(Tyr) + AMP + diphosphate + H(+). Its function is as follows. Catalyzes the attachment of tyrosine to tRNA(Tyr) in a two-step reaction: tyrosine is first activated by ATP to form Tyr-AMP and then transferred to the acceptor end of tRNA(Tyr). This chain is Tyrosine--tRNA ligase, found in Yersinia pseudotuberculosis serotype O:1b (strain IP 31758).